The primary structure comprises 321 residues: Polyamine aminopropyltransferase (321 aa).

Residues 23 to 256 enclose the PABS domain; the sequence is HLLYLEHAGP…DEWSFSFGSD (234 aa). Q53 contacts S-methyl-5'-thioadenosine. Spermidine contacts are provided by H84 and D108. Residues E127 and 159-160 contribute to the S-methyl-5'-thioadenosine site; that span reads DG. D177 acts as the Proton acceptor in catalysis.

Belongs to the spermidine/spermine synthase family. Homodimer or homotetramer.

Its subcellular location is the cytoplasm. The catalysed reaction is S-adenosyl 3-(methylsulfanyl)propylamine + putrescine = S-methyl-5'-thioadenosine + spermidine + H(+). It functions in the pathway amine and polyamine biosynthesis; spermidine biosynthesis; spermidine from putrescine: step 1/1. Its function is as follows. Catalyzes the irreversible transfer of a propylamine group from the amino donor S-adenosylmethioninamine (decarboxy-AdoMet) to putrescine (1,4-diaminobutane) to yield spermidine. The chain is Polyamine aminopropyltransferase from Korarchaeum cryptofilum (strain OPF8).